The sequence spans 210 residues: Proteasome subunit beta (210 aa).

Positions Met-1–Gly-9 are cleaved as a propeptide — removed in mature form; by autocatalysis. Thr-10 (nucleophile) is an active-site residue.

The protein belongs to the peptidase T1B family. The 20S proteasome core is composed of 14 alpha and 14 beta subunits that assemble into four stacked heptameric rings, resulting in a barrel-shaped structure. The two inner rings, each composed of seven catalytic beta subunits, are sandwiched by two outer rings, each composed of seven alpha subunits. The catalytic chamber with the active sites is on the inside of the barrel. Has a gated structure, the ends of the cylinder being occluded by the N-termini of the alpha-subunits. Is capped at one or both ends by the proteasome regulatory ATPase, PAN.

The protein resides in the cytoplasm. The enzyme catalyses Cleavage of peptide bonds with very broad specificity.. The formation of the proteasomal ATPase PAN-20S proteasome complex, via the docking of the C-termini of PAN into the intersubunit pockets in the alpha-rings, triggers opening of the gate for substrate entry. Interconversion between the open-gate and close-gate conformations leads to a dynamic regulation of the 20S proteasome proteolysis activity. Its function is as follows. Component of the proteasome core, a large protease complex with broad specificity involved in protein degradation. This Methanosarcina thermophila protein is Proteasome subunit beta.